The following is a 145-amino-acid chain: Protein FimA (145 aa).

The protein belongs to the fimbrial protein family.

It is found in the fimbrium. This Bordetella pertussis protein is Protein FimA (fimA).